The sequence spans 399 residues: Yellow-related salivary protein M10 (399 aa).

Residues 1 to 18 form the signal peptide; sequence MKFILSVLALASFQHVFC. N-linked (GlcNAc...) asparagine glycans are attached at residues N29 and N83.

This sequence belongs to the major royal jelly protein family. Salivary gland (at protein level).

The protein resides in the secreted. Functionally, probably modulates blood feeding of sand flies on vertebrate species by binding and sequestering different mediators involved in the host response. Functions as a chemoattractant for host neutrophils; likely acts through a G-protein-coupled receptor and effect is dependent on calcium influx and phosphatidylinositol 3-kinases (PI3K) activity. In terms of biological role, (Microbial infection) Probably enhances infection caused by Leishmania species in the host through augmentation of host neutrophil recruitment into the skin. This is Yellow-related salivary protein M10 from Phlebotomus duboscqi (Sandfly).